A 1445-amino-acid chain; its full sequence is Spermatogenesis-associated protein 31E1 (1445 aa).

A helical membrane pass occupies residues 64 to 84 (WMMDFILTSVCGLVLLFLLLL). Disordered stretches follow at residues 90–115 (PPSP…SRSR) and 169–262 (VPAK…PDSS). The segment covering 101-110 (SREPQRERSG) has biased composition (basic and acidic residues). Residues 241-260 (VFPPSPQPHGPLASSPPPPD) are compositionally biased toward pro residues. Asn408 carries N-linked (GlcNAc...) asparagine glycosylation. 4 disordered regions span residues 411–430 (TQPQ…TVGN), 460–557 (NPSS…ERTQ), 592–619 (LSQP…PGVV), and 637–761 (QEQS…KEHL). The segment covering 664–681 (PQSQAEDTQQALLPSQPS) has biased composition (polar residues). N-linked (GlcNAc...) asparagine glycosylation is found at Asn819, Asn906, and Asn1160. 4 disordered regions span residues 894–966 (FLGK…TCSL), 1143–1242 (RLPT…IGDK), 1254–1280 (KGQT…RKGG), and 1378–1445 (SPKA…CLAS). Polar residues-rich tracts occupy residues 906–915 (NRTTSKSVPT) and 1148–1165 (APLS…TASQ). The segment covering 1202–1217 (DKGEAHRRPRTGEQGH) has biased composition (basic and acidic residues).

This sequence belongs to the SPATA31 family.

The protein localises to the membrane. In terms of biological role, may play a role in spermatogenesis. This chain is Spermatogenesis-associated protein 31E1 (SPATA31E1), found in Homo sapiens (Human).